We begin with the raw amino-acid sequence, 367 residues long: tRNA (guanine(26)-N(2))-dimethyltransferase (367 aa).

Residues 1–365 form the Trm1 methyltransferase domain; sequence MRVSEGRVTV…ADVVEIREAT (365 aa). S-adenosyl-L-methionine is bound by residues Arg34, Arg64, Asp79, Asp105, and Ala106. The Zn(2+) site is built by Cys234, Cys237, Cys254, and Cys257.

Belongs to the class I-like SAM-binding methyltransferase superfamily. Trm1 family.

It catalyses the reaction guanosine(26) in tRNA + 2 S-adenosyl-L-methionine = N(2)-dimethylguanosine(26) in tRNA + 2 S-adenosyl-L-homocysteine + 2 H(+). Dimethylates a single guanine residue at position 26 of a number of tRNAs using S-adenosyl-L-methionine as donor of the methyl groups. The chain is tRNA (guanine(26)-N(2))-dimethyltransferase from Haloarcula marismortui (strain ATCC 43049 / DSM 3752 / JCM 8966 / VKM B-1809) (Halobacterium marismortui).